The sequence spans 161 residues: Small ribosomal subunit protein uS19 (161 aa).

A compositionally biased stretch (basic residues) spans 1 to 19 (MARQKKYSGKGGARKKNKQ). The tract at residues 1–26 (MARQKKYSGKGGARKKNKQKQSVAPR) is disordered.

Belongs to the universal ribosomal protein uS19 family.

Functionally, protein S19 forms a complex with S13 that binds strongly to the 16S ribosomal RNA. The sequence is that of Small ribosomal subunit protein uS19 from Methanococcus maripaludis (strain C7 / ATCC BAA-1331).